Here is a 573-residue protein sequence, read N- to C-terminus: 60 kDa heat shock protein, mitochondrial (573 aa).

The N-terminal 26 residues, 1-26 (MLRLPTVFRQMRPVSRVLAPHLTRAY), are a transit peptide targeting the mitochondrion. Lys31 bears the N6-succinyllysine mark. Residues Ser67 and Ser70 each carry the phosphoserine modification. Lys75 lines the ATP pocket. Lys75 is modified (N6-acetyllysine). Lys82 carries the post-translational modification N6-acetyllysine; alternate. Position 82 is an N6-succinyllysine; alternate (Lys82). At Lys87 the chain carries N6-acetyllysine. Tyr90 is subject to Phosphotyrosine. Lys91 carries the post-translational modification N6-acetyllysine. An ATP-binding site is contributed by 111 to 115 (DGTTT). An N6-acetyllysine; alternate modification is found at Lys125. At Lys125 the chain carries N6-succinyllysine; alternate. Residue Lys130 is modified to N6-acetyllysine. An N6-acetyllysine; alternate modification is found at Lys133. Lys133 is modified (N6-succinyllysine; alternate). Lys133 is subject to N6-malonyllysine; alternate. N6-acetyllysine is present on Lys156. 5 positions are modified to N6-acetyllysine; alternate: Lys191, Lys202, Lys205, Lys218, and Lys236. Residues Lys191, Lys202, Lys205, Lys218, and Lys236 each carry the N6-succinyllysine; alternate modification. N6-acetyllysine is present on Lys249. Lys250 is subject to N6-acetyllysine; alternate. Lys250 carries the N6-succinyllysine; alternate modification. N6-acetyllysine is present on residues Lys269 and Lys292. The residue at position 301 (Lys301) is an N6-succinyllysine. Residue Lys314 is modified to N6-acetyllysine. Lys352 carries the post-translational modification N6-acetyllysine; alternate. An N6-succinyllysine; alternate modification is found at Lys352. Lys389 is modified (N6-acetyllysine). Lys396 carries the post-translational modification N6-acetyllysine; alternate. At Lys396 the chain carries N6-succinyllysine; alternate. Ser410 is subject to Phosphoserine. ATP is bound at residue Gly440. Residue Lys469 is modified to N6-acetyllysine. The residue at position 481 (Lys481) is an N6-acetyllysine; alternate. Lys481 is subject to N6-succinyllysine; alternate. Ser488 is subject to Phosphoserine. Asp520 serves as a coordination point for ATP. A Glycyl lysine isopeptide (Lys-Gly) (interchain with G-Cter in SUMO2) cross-link involves residue Lys551.

It belongs to the chaperonin (HSP60) family. As to quaternary structure, homoheptamer arranged in a ring structure. The functional units of these chaperonins consist of heptameric rings of the large subunit Hsp60, which function as a back-to-back double ring. Interacts with 2 heptameric Hsp10 rings to form the symmetrical football complex. Interacts with HRAS. Interacts with ATAD3A. Interacts with ETFBKMT and EEF1AKMT3. Interacts with MFHAS1.

It is found in the mitochondrion matrix. The catalysed reaction is ATP + H2O + a folded polypeptide = ADP + phosphate + an unfolded polypeptide.. Functionally, chaperonin implicated in mitochondrial protein import and macromolecular assembly. Together with Hsp10, facilitates the correct folding of imported proteins. May also prevent misfolding and promote the refolding and proper assembly of unfolded polypeptides generated under stress conditions in the mitochondrial matrix. The functional units of these chaperonins consist of heptameric rings of the large subunit Hsp60, which function as a back-to-back double ring. In a cyclic reaction, Hsp60 ring complexes bind one unfolded substrate protein per ring, followed by the binding of ATP and association with 2 heptameric rings of the co-chaperonin Hsp10. This leads to sequestration of the substrate protein in the inner cavity of Hsp60 where, for a certain period of time, it can fold undisturbed by other cell components. Synchronous hydrolysis of ATP in all Hsp60 subunits results in the dissociation of the chaperonin rings and the release of ADP and the folded substrate protein. The polypeptide is 60 kDa heat shock protein, mitochondrial (HSPD1) (Pongo abelii (Sumatran orangutan)).